We begin with the raw amino-acid sequence, 184 residues long: ATP synthase subunit b, chloroplastic (184 aa).

A helical transmembrane segment spans residues 31 to 49; the sequence is IINSSVVLSVLIYFGKGVL.

It belongs to the ATPase B chain family. F-type ATPases have 2 components, F(1) - the catalytic core - and F(0) - the membrane proton channel. F(1) has five subunits: alpha(3), beta(3), gamma(1), delta(1), epsilon(1). F(0) has four main subunits: a(1), b(1), b'(1) and c(10-14). The alpha and beta chains form an alternating ring which encloses part of the gamma chain. F(1) is attached to F(0) by a central stalk formed by the gamma and epsilon chains, while a peripheral stalk is formed by the delta, b and b' chains.

The protein localises to the plastid. It is found in the chloroplast thylakoid membrane. In terms of biological role, f(1)F(0) ATP synthase produces ATP from ADP in the presence of a proton or sodium gradient. F-type ATPases consist of two structural domains, F(1) containing the extramembraneous catalytic core and F(0) containing the membrane proton channel, linked together by a central stalk and a peripheral stalk. During catalysis, ATP synthesis in the catalytic domain of F(1) is coupled via a rotary mechanism of the central stalk subunits to proton translocation. Functionally, component of the F(0) channel, it forms part of the peripheral stalk, linking F(1) to F(0). In Pinus thunbergii (Japanese black pine), this protein is ATP synthase subunit b, chloroplastic.